A 455-amino-acid chain; its full sequence is Kynurenine--oxoglutarate transaminase 3 (455 aa).

Residue G71 participates in substrate binding. K116 is modified (N6-acetyllysine; alternate). K116 is subject to N6-succinyllysine; alternate. Position 218 (N218) interacts with substrate. Position 280 is an N6-(pyridoxal phosphate)lysine (K280). Position 430 (R430) interacts with substrate.

Belongs to the class-I pyridoxal-phosphate-dependent aminotransferase family. As to quaternary structure, homodimer. Pyridoxal 5'-phosphate is required as a cofactor.

The enzyme catalyses L-kynurenine + 2-oxoglutarate = kynurenate + L-glutamate + H2O. It carries out the reaction L-kynurenine + glyoxylate = kynurenate + glycine + H2O. It catalyses the reaction 3-hydroxy-L-kynurenine + glyoxylate = xanthurenate + glycine + H2O. The catalysed reaction is an S-substituted L-cysteine + H2O = a thiol + pyruvate + NH4(+). Its pathway is amino-acid degradation; L-kynurenine degradation; kynurenate from L-kynurenine: step 1/2. Catalyzes the irreversible transamination of the L-tryptophan metabolite L-kynurenine to form kynurenic acid (KA), an intermediate in the tryptophan catabolic pathway which is also a broad spectrum antagonist of the three ionotropic excitatory amino acid receptors among others. May catalyze the beta-elimination of S-conjugates and Se-conjugates of L-(seleno)cysteine, resulting in the cleavage of the C-S or C-Se bond. Has transaminase activity towards L-kynurenine, tryptophan, phenylalanine, serine, cysteine, methionine, histidine, glutamine and asparagine with glyoxylate as an amino group acceptor (in vitro). Has lower activity with 2-oxoglutarate as amino group acceptor (in vitro). This chain is Kynurenine--oxoglutarate transaminase 3, found in Bos taurus (Bovine).